The following is a 157-amino-acid chain: Nascent polypeptide-associated complex subunit beta-1 (157 aa).

2 disordered regions span residues 19–42 (KVGG…KDDT) and 126–157 (EKHE…ADVE). The NAC-A/B domain occupies 38-103 (NKDDTKLQSQ…PQEKNLQDLF (66 aa)). Positions 126-142 (EKHEAKAPADAEKKDEA) are enriched in basic and acidic residues. T151 carries the post-translational modification Phosphothreonine.

It belongs to the NAC-beta family. Part of the nascent polypeptide-associated complex (NAC), consisting of EGD2 and either EGD1 or BTT1. NAC associates with ribosomes via EGD1 or BTT1, and with the CCR4-NOT complex.

Its subcellular location is the cytoplasm. The protein resides in the nucleus. In terms of biological role, component of the nascent polypeptide-associated complex (NAC), a dynamic component of the ribosomal exit tunnel, protecting the emerging polypeptides from interaction with other cytoplasmic proteins to ensure appropriate nascent protein targeting. The NAC complex also promotes mitochondrial protein import by enhancing productive ribosome interactions with the outer mitochondrial membrane and blocks the inappropriate interaction of ribosomes translating non-secretory nascent polypeptides with translocation sites in the membrane of the endoplasmic reticulum. EGD1 may act as a transcription factor that exert a negative effect on the expression of several genes that are transcribed by RNA polymerase II. The polypeptide is Nascent polypeptide-associated complex subunit beta-1 (EGD1) (Saccharomyces cerevisiae (strain YJM789) (Baker's yeast)).